Here is a 415-residue protein sequence, read N- to C-terminus: Probable G-protein coupled receptor 19 (415 aa).

The Extracellular segment spans residues methionine 1 to serine 69. 2 N-linked (GlcNAc...) asparagine glycosylation sites follow: asparagine 25 and asparagine 52. A helical membrane pass occupies residues isoleucine 70–isoleucine 90. At histidine 91–tyrosine 102 the chain is on the cytoplasmic side. Residues phenylalanine 103–valine 123 traverse the membrane as a helical segment. Residues leucine 124 to glutamine 152 are Extracellular-facing. Cysteine 138 and cysteine 210 are joined by a disulfide. A helical transmembrane segment spans residues isoleucine 153 to phenylalanine 173. At lysine 174 to arginine 182 the chain is on the cytoplasmic side. Residues methionine 183–glycine 203 traverse the membrane as a helical segment. The Extracellular segment spans residues serine 204–threonine 221. Residues alanine 222–phenylalanine 242 form a helical membrane-spanning segment. Topologically, residues tyrosine 243–methionine 277 are cytoplasmic. Residues phenylalanine 278–tryptophan 298 traverse the membrane as a helical segment. The Extracellular segment spans residues histidine 299 to serine 309. A helical transmembrane segment spans residues leucine 310–isoleucine 332. Residues tyrosine 333 to valine 415 lie on the Cytoplasmic side of the membrane.

It belongs to the G-protein coupled receptor 1 family. Abundant expression in the brain.

Its subcellular location is the cell membrane. G-protein coupled receptor that plays a role in the regulation of circadian rhythms and energy metabolism. Participates in maintaining proper circadian gene expression in the suprachiasmatic nucleus (SCN), the locus of the master circadian clock in the brain. May function as a coordinator of aging-associated metabolic dysfunction, stress response, DNA integrity management, and eventual senescence. Upon binding to adropin, modulates mitochondrial energy metabolism via the p44/42-PDK4 signaling pathway, influencing pyruvate dehydrogenase activity. This chain is Probable G-protein coupled receptor 19 (Gpr19), found in Rattus norvegicus (Rat).